A 160-amino-acid chain; its full sequence is MPSFDVVSEVDKHELTNAVDQANRELSTRFDFKGTNASFELEGYVVTQVAPSAFQLKQMLDILRGRLSARSIDVRCMDVADPLENLGGARQKVTIKQGIEQAIAKKLIAAIKASKVKVESQINGEKLRITGKKRDDLQAVIALLRKTDVDLPLQFENFRD.

It belongs to the YajQ family.

Functionally, nucleotide-binding protein. The polypeptide is Nucleotide-binding protein BP2916 (Bordetella pertussis (strain Tohama I / ATCC BAA-589 / NCTC 13251)).